The following is a 186-amino-acid chain: Elongation factor P (186 aa).

Belongs to the elongation factor P family.

It localises to the cytoplasm. Its pathway is protein biosynthesis; polypeptide chain elongation. Its function is as follows. Involved in peptide bond synthesis. Stimulates efficient translation and peptide-bond synthesis on native or reconstituted 70S ribosomes in vitro. Probably functions indirectly by altering the affinity of the ribosome for aminoacyl-tRNA, thus increasing their reactivity as acceptors for peptidyl transferase. This chain is Elongation factor P, found in Streptococcus pneumoniae (strain Hungary19A-6).